A 480-amino-acid chain; its full sequence is Gamma-aminobutyric acid receptor subunit rho-1 (480 aa).

A signal peptide spans 1–21; the sequence is MLAVQNMKFGIFLLWWGWVLA. Over 22 to 281 the chain is Extracellular; the sequence is AESTAHWPGR…LYINFTLRRH (260 aa). The span at 29 to 38 shows a compositional bias: basic and acidic residues; that stretch reads PGREVHEPSR. The interval 29–67 is disordered; the sequence is PGREVHEPSRKGSRPQRQRRGAHDDAHKQGSPILRRSSD. Residues 39–48 show a composition bias toward basic residues; sequence KGSRPQRQRR. Position 126 (R126) interacts with 4-aminobutanoate. N-linked (GlcNAc...) asparagine glycosylation occurs at N141. A 4-aminobutanoate-binding site is contributed by S190. Residues C199 and C213 are joined by a disulfide bond. Position 218 (E218) interacts with 4-aminobutanoate. 2 N-linked (GlcNAc...) asparagine glycosylation sites follow: N235 and N275. A helical transmembrane segment spans residues 282–302; it reads IFFFLLQTYFPATLMVMLSWV. Residues 303 to 314 lie on the Cytoplasmic side of the membrane; the sequence is SFWIDRRAVPAR. Residues 315-335 traverse the membrane as a helical segment; that stretch reads VPLGITTVLTMSTIITGVNAS. Over 336–346 the chain is Extracellular; the sequence is MPRVSYIKAVD. The chain crosses the membrane as a helical span at residues 347–367; the sequence is IYLWVSFVFVFLSVLEYAAVN. Topologically, residues 368 to 458 are cytoplasmic; it reads YLTTVQERKE…MRINTHAIDK (91 aa). The chain crosses the membrane as a helical span at residues 459-479; the sequence is YSRIIFPAAYILFNLIYWSIF. A topological domain (extracellular) is located at residue S480.

Belongs to the ligand-gated ion channel (TC 1.A.9) family. Gamma-aminobutyric acid receptor (TC 1.A.9.5) subfamily. GABRR1 sub-subfamily. As to quaternary structure, three rho subunits (rho-1/GBRR1, rho-2/GBRR2 and rho-3/GBRR3) coassemble either to form functional homopentamers or heteropentamers. Rho-1/GBRR1 subunits can also associate with alpha-1/GBRA1 subunits to form a functional GABAAR. Interacts with SQSTM1. As to expression, expressed in the cerebellum.

The protein resides in the postsynaptic cell membrane. It is found in the cell membrane. It catalyses the reaction chloride(in) = chloride(out). Inhibited by TPMPA, a rho-specific antagonist, when forming a homopentamer. In contrast with other GABAARs, rho-1 GABAAR is not inhibited by bicuculline when forming a homopentamer. In terms of biological role, rho subunit of the pentameric ligand-gated chloride channels responsible for mediating the effects of gamma-aminobutyric acid (GABA), the major inhibitory neurotransmitter in the brain. Rho-containing GABA-gated chloride channels are a subclass of GABA(A) receptors (GABAARs) entirely composed of rho subunits, where GABA molecules bind at the rho intersubunit interfaces. When activated by GABA, rho-GABAARs selectively allow the flow of chloride anions across the cell membrane down their electrochemical gradient. Rho-1 subunits are primarily expressed in retina where rho-1-containing GABAARs play a role in retinal neurotransmission. Rho-1 GABAARs are also involved in neuronal tonic (extrasynaptic) and phasic (synaptic) transmission in the Purkinje neurons of the cerebellum. Rho-1 GABAARs may also contribute to the regulation of glial development in the cerebellum by controlling extrasynaptic transmission. The chain is Gamma-aminobutyric acid receptor subunit rho-1 from Mus musculus (Mouse).